An 87-amino-acid chain; its full sequence is Defensin-A (87 aa).

Positions 1–19 are cleaved as a signal peptide; it reads MKFYLVLAFLTLCAVAVTA. The propeptide occupies 20–44; it reads LPAGDETRIDLETLEEDLRLVDGAQ. Disulfide bonds link Cys57-Cys78, Cys64-Cys83, and Cys68-Cys85.

As to expression, hemolymph and fat body.

The protein resides in the secreted. Functionally, antibacterial peptide mostly active against Gram-positive and Gram negative bacteria. This is Defensin-A from Glossina morsitans morsitans (Savannah tsetse fly).